We begin with the raw amino-acid sequence, 131 residues long: D-ribose pyranase (131 aa).

The active-site Proton donor is the His-20. Residues Asp-28, His-98, and 120–122 (FSN) contribute to the substrate site.

Belongs to the RbsD / FucU family. RbsD subfamily. As to quaternary structure, homodecamer.

The protein localises to the cytoplasm. It catalyses the reaction beta-D-ribopyranose = beta-D-ribofuranose. It participates in carbohydrate metabolism; D-ribose degradation; D-ribose 5-phosphate from beta-D-ribopyranose: step 1/2. In terms of biological role, catalyzes the interconversion of beta-pyran and beta-furan forms of D-ribose. The protein is D-ribose pyranase of Oenococcus oeni (strain ATCC BAA-331 / PSU-1).